The sequence spans 174 residues: Gamma-crystallin E (174 aa).

2 Beta/gamma crystallin 'Greek key' domains span residues 2–40 (GKITFYEDRGFQGRHYECSTDHSNLQPYFSRCNSVRVDS) and 41–83 (GCWM…RLIP). A connecting peptide region spans residues 84–87 (HSSS). Beta/gamma crystallin 'Greek key' domains are found at residues 88-128 (HRIR…HVME) and 129-171 (GYWV…RRIM).

It belongs to the beta/gamma-crystallin family. In terms of tissue distribution, detected in the superior olivary complex and fibers of the ventral aoustic stria of the auditory hindbrain.

In terms of biological role, crystallins are the dominant structural components of the vertebrate eye lens. The chain is Gamma-crystallin E (Cryge) from Rattus norvegicus (Rat).